The following is a 255-amino-acid chain: Small ribosomal subunit protein uS2 (255 aa).

This sequence belongs to the universal ribosomal protein uS2 family.

This is Small ribosomal subunit protein uS2 from Streptococcus pyogenes serotype M28 (strain MGAS6180).